Consider the following 204-residue polypeptide: MQTFIHGGGRLPEAVDAALAHYRHQIFVGQLGWQLPMADGRFERDQYDRDDTVYVVARDADGAICGCARLLPTTRPYLLKDVFAPLLMRGVPAPESPGVWELSRFAARSGASRARGARPDWAVRPMLASVVQCAAQRGARRLIGVTFVSMVRLFRRIGVRAHHAGPVRCIGGRPVVACWIDIDASTCAALGIPGASVVPGPALQ.

Belongs to the autoinducer synthase family.

The enzyme catalyses a fatty acyl-[ACP] + S-adenosyl-L-methionine = an N-acyl-L-homoserine lactone + S-methyl-5'-thioadenosine + holo-[ACP] + H(+). Required for the synthesis of acyl-HSL autoinducers that bind to SolR. This Ralstonia nicotianae (strain ATCC BAA-1114 / GMI1000) (Ralstonia solanacearum) protein is Acyl-homoserine-lactone synthase (solI).